The chain runs to 206 residues: Small ribosomal subunit protein uS4 (206 aa).

The S4 RNA-binding domain maps to 96 to 156; sequence SRLDNIVYRL…KKSKNQLRIK (61 aa).

Belongs to the universal ribosomal protein uS4 family. Part of the 30S ribosomal subunit. Contacts protein S5. The interaction surface between S4 and S5 is involved in control of translational fidelity.

One of the primary rRNA binding proteins, it binds directly to 16S rRNA where it nucleates assembly of the body of the 30S subunit. Its function is as follows. With S5 and S12 plays an important role in translational accuracy. This chain is Small ribosomal subunit protein uS4, found in Buchnera aphidicola subsp. Cinara cedri (strain Cc).